Here is a 100-residue protein sequence, read N- to C-terminus: MITEERILKVLRAPHISEKATMAAEKANTIVFKVAKDATKKEIKAAVEKLFEVEVKSVNTLITKGKTKRQGLRQGRRSDVKKAYVTLKEGQDLDFVGGAE.

Belongs to the universal ribosomal protein uL23 family. In terms of assembly, part of the 50S ribosomal subunit. Contacts protein L29, and trigger factor when it is bound to the ribosome.

Functionally, one of the early assembly proteins it binds 23S rRNA. One of the proteins that surrounds the polypeptide exit tunnel on the outside of the ribosome. Forms the main docking site for trigger factor binding to the ribosome. In Vibrio campbellii (strain ATCC BAA-1116), this protein is Large ribosomal subunit protein uL23.